We begin with the raw amino-acid sequence, 495 residues long: Iroquois-class homeodomain protein irx-4-B (495 aa).

A DNA-binding region (homeobox; TALE-type) is located at residues 141–203 (GSTRRKNATR…NARRRLKKEN (63 aa)). The disordered stretch occupies residues 203–245 (NKMTWPPRNKCSDEKRPYDEEEEEEEDSQKATIKNEKKTVDEE). Residues 235–245 (IKNEKKTVDEE) are compositionally biased toward basic and acidic residues.

Belongs to the TALE/IRO homeobox family.

The protein localises to the nucleus. Acts partially redundantly with other irx members in neural patterning. Required for formation of the posterior forebrain, midbrain, hindbrain, and to a lesser extent, spinal cord. Patterns the neuroectoderm in both the anterior/posterior and dorsal/ventral axes. Does not appear to play a role in pronephros kidney development. In Xenopus laevis (African clawed frog), this protein is Iroquois-class homeodomain protein irx-4-B (irx4-b).